The primary structure comprises 398 residues: Selenide, water dikinase (398 aa).

Residues 1 to 21 form a disordered region; it reads MSHKRPQSSAGESNGAVDLKT. Residue cysteine 46 is part of the active site. ATP is bound by residues lysine 49, 72–74, aspartate 97, aspartate 120, and 171–174; these read GMD and GGQT. Aspartate 74 is a binding site for Mg(2+). Residue aspartate 120 coordinates Mg(2+). Aspartate 278 provides a ligand contact to Mg(2+).

The protein belongs to the selenophosphate synthase 1 family. Class I subfamily. As to quaternary structure, homodimer. Requires Mg(2+) as cofactor.

It catalyses the reaction hydrogenselenide + ATP + H2O = selenophosphate + AMP + phosphate + 2 H(+). Its function is as follows. Synthesizes selenophosphate from selenide and ATP. The polypeptide is Selenide, water dikinase (Leishmania major).